We begin with the raw amino-acid sequence, 174 residues long: Co-chaperone protein HscB homolog (174 aa).

The J domain maps to 2–74 (NYFDLFNVVP…LRRAEHMLSL (73 aa)).

Belongs to the HscB family. In terms of assembly, interacts with HscA and stimulates its ATPase activity.

Its function is as follows. Co-chaperone involved in the maturation of iron-sulfur cluster-containing proteins. Seems to help targeting proteins to be folded toward HscA. This Shewanella frigidimarina (strain NCIMB 400) protein is Co-chaperone protein HscB homolog.